Here is a 95-residue protein sequence, read N- to C-terminus: Large ribosomal subunit protein bL25 (95 aa).

It belongs to the bacterial ribosomal protein bL25 family. As to quaternary structure, part of the 50S ribosomal subunit; part of the 5S rRNA/L5/L18/L25 subcomplex. Contacts the 5S rRNA. Binds to the 5S rRNA independently of L5 and L18.

Its function is as follows. This is one of the proteins that binds to the 5S RNA in the ribosome where it forms part of the central protuberance. This Haemophilus ducreyi (strain 35000HP / ATCC 700724) protein is Large ribosomal subunit protein bL25.